The following is a 253-amino-acid chain: 28 kDa inner dynein arm light chain, axonemal (253 aa).

Residues 19-44 (TSKDKGKGAKGTPGKKGALPPVEQKP) are disordered. Residues 160–239 (IRKALQTEQG…LKQQLETFLV (80 aa)) adopt a coiled-coil conformation.

The protein belongs to the inner dynein arm light chain family.

The protein localises to the cytoplasm. The protein resides in the cytoskeleton. It localises to the flagellum axoneme. Its function is as follows. Plays a dynamic role in flagellar motility. May be necessary for stable assembly of a subset of inner dynein arms or for the binding of these arms to the outer doublet microtubules of the axoneme. The polypeptide is 28 kDa inner dynein arm light chain, axonemal (IDA4) (Chlamydomonas reinhardtii (Chlamydomonas smithii)).